We begin with the raw amino-acid sequence, 503 residues long: MDKLKRDVKEETSRQPCFLYPLLFQEDLYAIAYDRHFNRSSSFEPMEDSSYNNRFSFITVKRSISRIRQQNGSIIPFVNCDQNQLVGHNRSFYYELVLGGFTAVLEVPFSIRSKHYIEGMNEWTSFRSINSIFPLMEDKIPHSNYLLEIRIPYLIHPEILVRTFRRWIQDAPFLHSLRSVLHEHRNLIISSNLDQLTLIASKEKKRLSLFLWNYYAYECESLLVPLWKRFYHSRSLSYESFIERTPFYRKIEHIDIFSHKYKHLKKSIWFLKDPSIHYMRYRESSIIALRGTYLLVKKWRYHLTNLWQCHFHLWLRPYRIYIDELSKTNNCFYFLGYLLSVKMKTSVVQIRMLDDSFITDLITKEFDPIAPTTLLIGSWAKEKFGDISGRPISRLAWTGLTDNDILDRFDRIWRNIFHYYRGSSKKDGLYRIKYILRLSCAKTLACKHKSTIRVVRERFGSELFTKSFPKERESIFLSFSKIRSQRERIWHSDIIQRNFLVNS.

This sequence belongs to the intron maturase 2 family. MatK subfamily.

Its subcellular location is the plastid. It is found in the chloroplast. Functionally, usually encoded in the trnK tRNA gene intron. Probably assists in splicing its own and other chloroplast group II introns. In Stangeria eriopus (Natal grass cycad), this protein is Maturase K.